The chain runs to 435 residues: Chromatin structure-remodeling complex subunit RSC7 (435 aa).

The interval 1-97 is disordered; sequence MSDSEGGLAS…DKGVTRSRNR (97 aa). The span at 30 to 66 shows a compositional bias: acidic residues; sequence DTEDLDIDENDENEDDDYREEEANEGVNEEEISDEEE. S86 carries the post-translational modification Phosphoserine. Residues 248–435 are functional region; able to complement all NPL6 null allele phenotypes; that stretch reads ELRTKGNVIE…QNFEKCNEYI (188 aa).

The protein belongs to the RSC7/SWP82 family. RSC7 subfamily. As to quaternary structure, interacts with ARP7, ARP9, RSC3, RSC8, RSC30 and STH1. Component of the two forms of the RSC complex composed of at least either RSC1 or RSC2, and ARP7, ARP9, LDB7, NPL6, RSC3, RSC30, RSC4, RSC58, RSC6, RSC8, RSC9, SFH1, STH1, HTL1 and probably RTT102. The complexes interact with histone and histone variant components of centromeric chromatin. Component of a fungal-specific module (HTL1-LDB7-NPL6-RSC3-RSC30) within the RSC complex.

It localises to the nucleus. Component of the chromatin structure remodeling complex (RSC), which is involved in transcription regulation and nucleosome positioning. RSC is responsible for the transfer of a histone octamer from a nucleosome core particle to naked DNA. The reaction requires ATP and involves an activated RSC-nucleosome intermediate. Remodeling reaction also involves DNA translocation, DNA twist and conformational change. As a reconfigurer of centromeric and flanking nucleosomes, RSC complex is required both for proper kinetochore function in chromosome segregation and, via a PKC1-dependent signaling pathway, for organization of the cellular cytoskeleton. Together with HTL1, LDB7, RSC3, RSC30 components, defines a fungal-specific module within the RSC complex that plays a role in many cellular functions including the maintenance of cell wall integrity. Acidic protein important for nuclear protein localization. This chain is Chromatin structure-remodeling complex subunit RSC7 (NPL6), found in Saccharomyces cerevisiae (strain ATCC 204508 / S288c) (Baker's yeast).